The primary structure comprises 699 residues: D-(-)-3-hydroxybutyrate oligomer hydrolase (699 aa).

The signal sequence occupies residues Met-1–Ala-33. The active-site Charge relay system is the Ser-311.

The protein belongs to the D-(-)-3-hydroxybutyrate oligomer hydrolase family.

The protein resides in the secreted. It catalyses the reaction (3R)-hydroxybutanoate dimer + H2O = 2 (R)-3-hydroxybutanoate + H(+). The protein operates within lipid metabolism; butanoate metabolism. In terms of biological role, participates in the degradation of poly-3-hydroxybutyrate (PHB). It works downstream of poly(3-hydroxybutyrate) depolymerase, hydrolyzing D(-)-3-hydroxybutyrate oligomers of various length (3HB-oligomers) into 3HB-monomers. This Burkholderia pseudomallei (strain 1710b) protein is D-(-)-3-hydroxybutyrate oligomer hydrolase.